A 304-amino-acid chain; its full sequence is Cell surface-binding protein OPG105 (304 aa).

Residues 1-235 enclose the Alpha-carbonic anhydrase domain; sequence MSQQLSPINI…NDDTEVYYSG (235 aa). The Virion surface portion of the chain corresponds to 1-275; that stretch reads MSQQLSPINI…YQKYIEGNKT (275 aa). A helical transmembrane segment spans residues 276–294; the sequence is FAIIAIVFVYILTAILFLM. The Intravirion portion of the chain corresponds to 295–304; the sequence is SRRYSREKQN.

This sequence belongs to the alpha-carbonic anhydrase family. In terms of assembly, homodimer; disulfide-linked. Apparently non-glycosylated.

It is found in the virion membrane. Its function is as follows. Binds to chondroitin sulfate on the cell surface to provide virion attachment to target cell. In Homo sapiens (Human), this protein is Cell surface-binding protein OPG105 (OPG105).